The sequence spans 550 residues: Methyl-accepting chemotaxis protein PcaY (550 aa).

Topologically, residues methionine 1 to glycine 19 are cytoplasmic. A helical transmembrane segment spans residues methionine 20 to tryptophan 40. Residues alanine 41–glutamine 198 lie on the Periplasmic side of the membrane. Residues glycine 44–arginine 196 are ligand-binding domain. Residues arginine 71 and asparagine 75 each contribute to the benzoate site. Salicylate-binding residues include arginine 71, asparagine 75, and tyrosine 135. Position 71 to 78 (arginine 71 to serine 78) interacts with 3,4-dihydroxybenzoate. L-quinate is bound by residues arginine 71–serine 78, tyrosine 135, glutamine 142, and asparagine 158. Glutamine 169 serves as a coordination point for 3,4-dihydroxybenzoate. The helical transmembrane segment at leucine 199 to isoleucine 219 threads the bilayer. The Cytoplasmic segment spans residues alanine 220–valine 550. The 53-residue stretch at glutamine 221–glycine 273 folds into the HAMP domain. The 237-residue stretch at cysteine 278 to arginine 514 folds into the Methyl-accepting transducer domain.

The protein belongs to the methyl-accepting chemotaxis (MCP) protein family. As to quaternary structure, ligand free PcaY_PP-ligand-binding domain (LBD) is present in a monomer-dimer equilibrium. Only the dimeric LBD is able to bind ligands which in turn causes dimer stabilization.

Its subcellular location is the cell inner membrane. In terms of biological role, chemotactic-signal transducers respond to changes in the concentration of attractants and repellents in the environment, transduce a signal from the outside to the inside of the cell, and facilitate sensory adaptation through the variation of the level of methylation. PcaY recognizes a wide range of compounds containing a C6-membered ring with a carboxylate group. Binds preferentially compounds that serve as carbon sources and among them those that rapidly promote growth. Tightest binding compounds are quinate, shikimate, 3-dehydroshikimate and protocatechuate, which are at the interception of the biosynthetic shikimate and catabolic quinate pathways. This Pseudomonas putida (strain ATCC 47054 / DSM 6125 / CFBP 8728 / NCIMB 11950 / KT2440) protein is Methyl-accepting chemotaxis protein PcaY.